Here is a 572-residue protein sequence, read N- to C-terminus: Proline--tRNA ligase (572 aa).

The protein belongs to the class-II aminoacyl-tRNA synthetase family. ProS type 1 subfamily. As to quaternary structure, homodimer.

The protein localises to the cytoplasm. It catalyses the reaction tRNA(Pro) + L-proline + ATP = L-prolyl-tRNA(Pro) + AMP + diphosphate. Functionally, catalyzes the attachment of proline to tRNA(Pro) in a two-step reaction: proline is first activated by ATP to form Pro-AMP and then transferred to the acceptor end of tRNA(Pro). As ProRS can inadvertently accommodate and process non-cognate amino acids such as alanine and cysteine, to avoid such errors it has two additional distinct editing activities against alanine. One activity is designated as 'pretransfer' editing and involves the tRNA(Pro)-independent hydrolysis of activated Ala-AMP. The other activity is designated 'posttransfer' editing and involves deacylation of mischarged Ala-tRNA(Pro). The misacylated Cys-tRNA(Pro) is not edited by ProRS. The chain is Proline--tRNA ligase from Dichelobacter nodosus (strain VCS1703A).